Reading from the N-terminus, the 396-residue chain is G-protein coupled receptor 84 (396 aa).

At 1 to 26 (MWNSSDANFSCYHESVLGYRYVAVSW) the chain is on the extracellular side. 2 N-linked (GlcNAc...) asparagine glycosylation sites follow: N3 and N8. A helical membrane pass occupies residues 27–47 (GVVVAVTGTVGNVLTLLALAI). Residues 48-57 (QPKLRTRFNL) lie on the Cytoplasmic side of the membrane. Residues 58 to 78 (LIANLTLADLLYCTLLQPFSV) form a helical membrane-spanning segment. At 79-94 (DTYLHLHWRTGATFCR) the chain is on the extracellular side. A helical membrane pass occupies residues 95–115 (VFGLLLFASNSVSILTLCLIA). Topologically, residues 116-144 (LGRYLLIAHPKLFPQVFSAKGIVLALVST) are cytoplasmic. Residues 145 to 165 (WVVGVASFAPLWPIYILVPVV) traverse the membrane as a helical segment. Residues 166-180 (CTCSFDRIRGRPYTT) are Extracellular-facing. A helical transmembrane segment spans residues 181–201 (ILMGIYFVLGLSSVGIFYCLI). Residues 202-320 (HRQVKRAAQA…SSEFGKVTRM (119 aa)) lie on the Cytoplasmic side of the membrane. 2 positions are modified to phosphoserine: S221 and S224. Positions 244–311 (RLASGGPSEG…KGARRAPDSS (68 aa)) are disordered. Residues 247–260 (SGGPSEGISSEPVS) are compositionally biased toward low complexity. Phosphothreonine occurs at positions 263 and 264. The chain crosses the membrane as a helical span at residues 321–341 (CFAVFLCFALSYIPFLLLNIL). Residues 342–352 (DARVQAPRVVH) are Extracellular-facing. The helical transmembrane segment at 353–373 (MLAANLTWLNGCINPVLYAAM) threads the bilayer. At 374-396 (NRQFRQAYGSILKRGPRSFHRLH) the chain is on the cytoplasmic side.

The protein belongs to the G-protein coupled receptor 1 family. In terms of assembly, interacts with ARRB2 and ARR3. Post-translationally, phosphorylated by a subset of GPR84-activating ligands. Constitutively phosphorylated at Ser-221 and Ser-224 in the absence of 2-HTP. By contrast, Thr-263 and Thr-264 are phosphorylated only following prior cell treatment with 2-HTP. As to expression, expressed predominantly in hematopoietic tissues. High levels detected in the bone marrow and lower levels in the peripheral leukocytes and lung. Also expressed in brain, heart, muscle, colon, thymus, spleen, kidney, liver, placenta and intestine. Within the leukocyte population expression is higher in neutrophils and eosinophils relative to T- or B-lymphocytes.

It is found in the cell membrane. G protein-coupled receptor that responds endogenously to dietary fatty acids or nutrient, specifically medium-chain free fatty acid (FFA) with carbon chain lengths of C9 to C14. Capric acid (C10:0), undecanoic acid (C11:0) and lauric acid (C12:0) are the most potent agonists. In immune cells, functions as a pro-inflammatory receptor via 6-OAU and promotes the expression of pro-inflammatory mediators such as TNFalpha, IL-6 and IL-12B as well as stimulating chemotactic responses through activation of signaling mediators AKT, ERK and NF-kappa-B. In addition, triggers increased bacterial adhesion and phagocytosis in macrophages and regulates pro-inflammatory function via enhancing NLRP3 inflammasome activation. Also plays an important role in inflammation by modulating neutrophil functions. Mechanistically, promotes neutrophil chemotaxis, reactive oxygen species (ROS) production and degranulation via LYN-AKT/ERK pathway. To regulate ROS, communicates with the two formyl peptide receptors FPR2 and FPR1 to control the NADPH oxidase activity in neutrophils. The chain is G-protein coupled receptor 84 (GPR84) from Homo sapiens (Human).